The following is a 1325-amino-acid chain: Bile salt export pump (1325 aa).

The Cytoplasmic segment spans residues 1–62; sequence MSDAVILRSV…FSSTTDIWLM (62 aa). Residues 62 to 385 form the ABC transmembrane type-1 1 domain; that stretch reads MFVGSLCAFL…ASSCLEAFAT (324 aa). A helical membrane pass occupies residues 63–83; that stretch reads FVGSLCAFLHGLSHPGVLLIF. At 84 to 147 the chain is on the extracellular side; the sequence is GTMTDVFIAY…MIKFASYYAG (64 aa). N-linked (GlcNAc...) asparagine glycosylation is found at asparagine 109, asparagine 116, asparagine 122, and asparagine 125. A helical transmembrane segment spans residues 148–168; the sequence is IALLVLITGYIQICFWVIAAA. Over 169-240 the chain is Cytoplasmic; it reads RQIQKMRKIS…FLLGFYQGWK (72 aa). The chain crosses the membrane as a helical span at residues 241 to 261; the sequence is LTLVIISVSPLIGIGAAIIGL. Over 262-319 the chain is Extracellular; that stretch reads SVSKFTDYELKAYAKAGSVADEVISSMRTVAAFGGEKKEVERYEKNLVFAQRWGIRKG. A helical transmembrane segment spans residues 320 to 340; the sequence is IVMGFFTGFMWCLIFLCYALA. The Cytoplasmic segment spans residues 341-353; the sequence is FWYGSKLVLEDGE. A helical transmembrane segment spans residues 354–374; that stretch reads YTAGTLVQIFLSILLGALNLG. Residues asparagine 375, asparagine 424, and asparagine 440 are each glycosylated (N-linked (GlcNAc...) asparagine). Residues 375–759 lie on the Extracellular side of the membrane; the sequence is NASSCLEAFA…KFNAPEWPYM (385 aa). The ABC transporter 1 domain maps to 420-656; the sequence is IEFHNVTFHY…KGVYFTLVTL (237 aa). Residue 455-462 coordinates ATP; that stretch reads GSSGSGKS. Asparagine 591 carries an N-linked (GlcNAc...) asparagine glycan. The region spanning 759–1047 is the ABC transmembrane type-1 2 domain; it reads MLFGAVGAAV…ASSYTPSYAK (289 aa). Residues 760–780 traverse the membrane as a helical segment; it reads LFGAVGAAVNGSVTPLYAFLF. Over 781-798 the chain is Cytoplasmic; the sequence is SQILGTFSLPDKEEQRSQ. A helical membrane pass occupies residues 799–819; sequence INGVCLLFVAVGCVSLCTQFL. Residues 820 to 894 are Extracellular-facing; that stretch reads QGYAFAKSGE…NSFTNVTVAM (75 aa). A glycan (N-linked (GlcNAc...) asparagine) is linked at asparagine 889. The chain crosses the membrane as a helical span at residues 895-915; it reads IIAFFFSWKLSLVIMCFFPFL. Residues 916 to 983 lie on the Cytoplasmic side of the membrane; the sequence is ALSGALQTRM…PFKTAFRKAN (68 aa). The helical transmembrane segment at 984–1004 threads the bilayer; it reads VYGFCFGFSQCIVFVANSASY. Residues 1005-1014 lie on the Extracellular side of the membrane; it reads RYGGYLIPNE. The helical transmembrane segment at 1015-1035 threads the bilayer; that stretch reads GLHFSYVFRVISSVVLSATAL. Over 1036–1325 the chain is Cytoplasmic; that stretch reads GRASSYTPSY…KLVTTGAPIS (290 aa). An ABC transporter 2 domain is found at 1082–1320; sequence VDFVDCKFTY…KGAYYKLVTT (239 aa). ATP is bound at residue 1117–1124; the sequence is GSSGCGKS.

The protein belongs to the ABC transporter superfamily. ABCB family. Multidrug resistance exporter (TC 3.A.1.201) subfamily. As to quaternary structure, interacts with HAX1. Interacts with the adapter protein complex 2 (AP-2) throught AP2A2 or AP2A1; this interaction regulates cell membrane expression of ABCB11 through its internalization in a clathrin-dependent manner and its subsequent degradation. In terms of processing, N-glycosylated. Post-translationally, ubiquitinated; short-chain ubiquitination regulates cell-Surface expression of ABCB11. In terms of tissue distribution, liver.

The protein localises to the apical cell membrane. It is found in the recycling endosome membrane. The protein resides in the endosome. Its subcellular location is the cell membrane. It carries out the reaction cholate(in) + ATP + H2O = cholate(out) + ADP + phosphate + H(+). The enzyme catalyses taurocholate(in) + ATP + H2O = taurocholate(out) + ADP + phosphate + H(+). The catalysed reaction is glycocholate(in) + ATP + H2O = glycocholate(out) + ADP + phosphate + H(+). It catalyses the reaction glycochenodeoxycholate(in) + ATP + H2O = glycochenodeoxycholate(out) + ADP + phosphate + H(+). It carries out the reaction taurochenodeoxycholate(in) + ATP + H2O = taurochenodeoxycholate(out) + ADP + phosphate + H(+). The enzyme catalyses glycoursodeoxycholate(in) + ATP + H2O = glycoursodeoxycholate(out) + ADP + phosphate + H(+). The catalysed reaction is tauroursodeoxycholate(in) + ATP + H2O = tauroursodeoxycholate(out) + ADP + phosphate + H(+). It catalyses the reaction taurodeoxycholate(in) + ATP + H2O = taurodeoxycholate(out) + ADP + phosphate + H(+). It carries out the reaction taurolithocholate 3-sulfate(in) + ATP + H2O = taurolithocholate 3-sulfate(out) + ADP + phosphate + H(+). The enzyme catalyses pravastatin(in) + ATP + H2O = pravastatin(out) + ADP + phosphate + H(+). The uptake of taurocholate is inhibited by taurolithocholate sulfate with an IC(50) of 9 uM. Pravastatin competitively inhibits the transport of taurocholic acid. Cyclosporin A, glibenclamide, rifampicin and troglitazonestrongly competitively inhibit the transport activity of taurocholate. The canalicular transport activity of taurocholate is strongly dependent on canalicular membrane cholesterol content. The uptake of taurocholate is increased by short- and medium-chain fatty acids. Cholesterol increases transport capacity of taurocholate without affecting the affinity for the substrate. Its function is as follows. Catalyzes the transport of the major hydrophobic bile salts, such as taurine and glycine-conjugated cholic acid across the canalicular membrane of hepatocytes in an ATP-dependent manner, therefore participates in hepatic bile acid homeostasis and consequently to lipid homeostasis through regulation of biliary lipid secretion in a bile salts dependent manner. Transports taurine-conjugated bile salts more rapidly than glycine-conjugated bile salts. Also transports non-bile acid compounds, such as pravastatin and fexofenadine in an ATP-dependent manner and may be involved in their biliary excretion. The polypeptide is Bile salt export pump (Canis lupus familiaris (Dog)).